Here is a 379-residue protein sequence, read N- to C-terminus: MKILRKNHPLLKIMNHSFIDLPTPSNISSWWNFGSLLGTCLVIQILTGLFLAMHYTSDTTTAFSSVAHICRDVNYGWLIRYLHANGASMFFICLFIHVGRGIYYGSYVLSETWNIGIILFLTTMATAFVGYVLPWGQMSFWGATVITNLLSAIPYIGSTLVEWIWGGFSVDKATLTRFFAFHFILPFIIAAFTLVHLLFLHETGSNNPSGLNSNSDKIPFHPYYTTKDLLGIFLLLLALMILTLFFPDILGDPDNYTPANPLNTPAHIKPEWYFLFAYAILRSIPNKLGGVLALILSILILATFPLLNNSKQHGLIFRPITQTIYWIFIANLLVLTWIGGQPVELPFTTIGQIASITYFAIIIILIPISNAIENNIIKL.

4 helical membrane passes run 33–53 (FGSL…FLAM), 77–98 (WLIR…FIHV), 113–133 (WNIG…GYVL), and 178–198 (FFAF…VHLL). Heme b contacts are provided by H83 and H97. The heme b site is built by H182 and H196. Position 201 (H201) interacts with a ubiquinone. The next 4 membrane-spanning stretches (helical) occupy residues 226-246 (TKDL…TLFF), 288-308 (LGGV…PLLN), 320-340 (ITQT…WIGG), and 347-367 (FTTI…ILIP).

This sequence belongs to the cytochrome b family. The cytochrome bc1 complex contains 11 subunits: 3 respiratory subunits (MT-CYB, CYC1 and UQCRFS1), 2 core proteins (UQCRC1 and UQCRC2) and 6 low-molecular weight proteins (UQCRH/QCR6, UQCRB/QCR7, UQCRQ/QCR8, UQCR10/QCR9, UQCR11/QCR10 and a cleavage product of UQCRFS1). This cytochrome bc1 complex then forms a dimer. The cofactor is heme b.

The protein resides in the mitochondrion inner membrane. In terms of biological role, component of the ubiquinol-cytochrome c reductase complex (complex III or cytochrome b-c1 complex) that is part of the mitochondrial respiratory chain. The b-c1 complex mediates electron transfer from ubiquinol to cytochrome c. Contributes to the generation of a proton gradient across the mitochondrial membrane that is then used for ATP synthesis. The chain is Cytochrome b (MT-CYB) from Akodon azarae (Azara's grass mouse).